Here is a 673-residue protein sequence, read N- to C-terminus: DNA ligase (673 aa).

NAD(+) contacts are provided by residues 38-42, 87-88, and Glu119; these read DSVYD and SL. The active-site N6-AMP-lysine intermediate is Lys121. NAD(+)-binding residues include Arg142, Glu179, Lys296, and Lys320. Zn(2+) is bound by residues Cys414, Cys417, Cys432, and Cys438. A BRCT domain is found at 595–673; that stretch reads VVKSEIAGKT…EEAFLKLLKS (79 aa).

It belongs to the NAD-dependent DNA ligase family. LigA subfamily. The cofactor is Mg(2+). Requires Mn(2+) as cofactor.

It carries out the reaction NAD(+) + (deoxyribonucleotide)n-3'-hydroxyl + 5'-phospho-(deoxyribonucleotide)m = (deoxyribonucleotide)n+m + AMP + beta-nicotinamide D-nucleotide.. Its function is as follows. DNA ligase that catalyzes the formation of phosphodiester linkages between 5'-phosphoryl and 3'-hydroxyl groups in double-stranded DNA using NAD as a coenzyme and as the energy source for the reaction. It is essential for DNA replication and repair of damaged DNA. This is DNA ligase from Coxiella burnetii (strain RSA 493 / Nine Mile phase I).